The following is a 440-amino-acid chain: tRNA-2-methylthio-N(6)-dimethylallyladenosine synthase (440 aa).

One can recognise an MTTase N-terminal domain in the interval 4–122 (KSYYIITHGC…LPKILERVFE (119 aa)). Residues Cys13, Cys49, Cys83, Cys159, Cys163, and Cys166 each coordinate [4Fe-4S] cluster. The Radical SAM core domain maps to 145 to 375 (REPGVRAWVT…IELQNGISLE (231 aa)). One can recognise a TRAM domain in the interval 378-440 (KNEEGNIHEI…KLFHLEGVLV (63 aa)).

Belongs to the methylthiotransferase family. MiaB subfamily. In terms of assembly, monomer. [4Fe-4S] cluster serves as cofactor.

It localises to the cytoplasm. It catalyses the reaction N(6)-dimethylallyladenosine(37) in tRNA + (sulfur carrier)-SH + AH2 + 2 S-adenosyl-L-methionine = 2-methylsulfanyl-N(6)-dimethylallyladenosine(37) in tRNA + (sulfur carrier)-H + 5'-deoxyadenosine + L-methionine + A + S-adenosyl-L-homocysteine + 2 H(+). Its function is as follows. Catalyzes the methylthiolation of N6-(dimethylallyl)adenosine (i(6)A), leading to the formation of 2-methylthio-N6-(dimethylallyl)adenosine (ms(2)i(6)A) at position 37 in tRNAs that read codons beginning with uridine. This chain is tRNA-2-methylthio-N(6)-dimethylallyladenosine synthase, found in Carboxydothermus hydrogenoformans (strain ATCC BAA-161 / DSM 6008 / Z-2901).